A 265-amino-acid chain; its full sequence is Hydroxyethylthiazole kinase (265 aa).

Met36 is a substrate binding site. ATP-binding residues include Lys112 and Ser160. Gly187 contributes to the substrate binding site.

Belongs to the Thz kinase family. The cofactor is Mg(2+).

The catalysed reaction is 5-(2-hydroxyethyl)-4-methylthiazole + ATP = 4-methyl-5-(2-phosphooxyethyl)-thiazole + ADP + H(+). It functions in the pathway cofactor biosynthesis; thiamine diphosphate biosynthesis; 4-methyl-5-(2-phosphoethyl)-thiazole from 5-(2-hydroxyethyl)-4-methylthiazole: step 1/1. Its function is as follows. Catalyzes the phosphorylation of the hydroxyl group of 4-methyl-5-beta-hydroxyethylthiazole (THZ). The chain is Hydroxyethylthiazole kinase from Clostridium perfringens (strain ATCC 13124 / DSM 756 / JCM 1290 / NCIMB 6125 / NCTC 8237 / Type A).